The following is a 255-amino-acid chain: Diphthine synthase (255 aa).

Residues leucine 9, aspartate 85, valine 88, 113-114 (SI), leucine 164, alanine 207, and histidine 232 contribute to the S-adenosyl-L-methionine site.

This sequence belongs to the diphthine synthase family. Homodimer.

It catalyses the reaction 2-[(3S)-amino-3-carboxypropyl]-L-histidyl-[translation elongation factor 2] + 3 S-adenosyl-L-methionine = diphthine-[translation elongation factor 2] + 3 S-adenosyl-L-homocysteine + 3 H(+). Its pathway is protein modification; peptidyl-diphthamide biosynthesis. In terms of biological role, S-adenosyl-L-methionine-dependent methyltransferase that catalyzes the trimethylation of the amino group of the modified target histidine residue in translation elongation factor 2 (EF-2), to form an intermediate called diphthine. The three successive methylation reactions represent the second step of diphthamide biosynthesis. This is Diphthine synthase from Methanococcus vannielii (strain ATCC 35089 / DSM 1224 / JCM 13029 / OCM 148 / SB).